A 554-amino-acid chain; its full sequence is Phosphomethylpyrimidine synthase (554 aa).

Residues Asn191, Met220, Tyr249, His285, Ser305–Gly307, Asp346–Arg349, and Glu385 contribute to the substrate site. Position 389 (His389) interacts with Zn(2+). Substrate is bound at residue Tyr412. Position 453 (His453) interacts with Zn(2+). 3 residues coordinate [4Fe-4S] cluster: Cys533, Cys536, and Cys541.

This sequence belongs to the ThiC family. In terms of assembly, homodimer. The cofactor is [4Fe-4S] cluster.

It carries out the reaction 5-amino-1-(5-phospho-beta-D-ribosyl)imidazole + S-adenosyl-L-methionine = 4-amino-2-methyl-5-(phosphooxymethyl)pyrimidine + CO + 5'-deoxyadenosine + formate + L-methionine + 3 H(+). It functions in the pathway cofactor biosynthesis; thiamine diphosphate biosynthesis. Catalyzes the synthesis of the hydroxymethylpyrimidine phosphate (HMP-P) moiety of thiamine from aminoimidazole ribotide (AIR) in a radical S-adenosyl-L-methionine (SAM)-dependent reaction. The sequence is that of Phosphomethylpyrimidine synthase from Ehrlichia chaffeensis (strain ATCC CRL-10679 / Arkansas).